A 289-amino-acid chain; its full sequence is D-alanine aminotransferase (289 aa).

Residue Tyr-31 coordinates substrate. Arg-50 contributes to the pyridoxal 5'-phosphate binding site. Residues Arg-99 and His-101 each contribute to the substrate site. At Lys-147 the chain carries N6-(pyridoxal phosphate)lysine. Residue Glu-179 participates in pyridoxal 5'-phosphate binding.

It belongs to the class-IV pyridoxal-phosphate-dependent aminotransferase family. Homodimer. Requires pyridoxal 5'-phosphate as cofactor.

The catalysed reaction is D-alanine + 2-oxoglutarate = D-glutamate + pyruvate. Functionally, acts on the D-isomers of alanine, leucine, aspartate, glutamate, aminobutyrate, norvaline and asparagine. The enzyme transfers an amino group from a substrate D-amino acid to the pyridoxal phosphate cofactor to form pyridoxamine and an alpha-keto acid in the first half-reaction. The second half-reaction is the reverse of the first, transferring the amino group from the pyridoxamine to a second alpha-keto acid to form the product D-amino acid via a ping-pong mechanism. This is an important process in the formation of D-alanine and D-glutamate, which are essential bacterial cell wall components. The polypeptide is D-alanine aminotransferase (dat) (Listeria monocytogenes serotype 1/2a (strain 10403S)).